A 578-amino-acid chain; its full sequence is Proline--tRNA ligase (578 aa).

This sequence belongs to the class-II aminoacyl-tRNA synthetase family. ProS type 1 subfamily. As to quaternary structure, homodimer.

The protein resides in the cytoplasm. It carries out the reaction tRNA(Pro) + L-proline + ATP = L-prolyl-tRNA(Pro) + AMP + diphosphate. Its function is as follows. Catalyzes the attachment of proline to tRNA(Pro) in a two-step reaction: proline is first activated by ATP to form Pro-AMP and then transferred to the acceptor end of tRNA(Pro). As ProRS can inadvertently accommodate and process non-cognate amino acids such as alanine and cysteine, to avoid such errors it has two additional distinct editing activities against alanine. One activity is designated as 'pretransfer' editing and involves the tRNA(Pro)-independent hydrolysis of activated Ala-AMP. The other activity is designated 'posttransfer' editing and involves deacylation of mischarged Ala-tRNA(Pro). The misacylated Cys-tRNA(Pro) is not edited by ProRS. This is Proline--tRNA ligase from Paraburkholderia phymatum (strain DSM 17167 / CIP 108236 / LMG 21445 / STM815) (Burkholderia phymatum).